Consider the following 342-residue polypeptide: (Lyso)-N-acylphosphatidylethanolamine lipase (342 aa).

The AB hydrolase-1 domain maps to 70–324 (PLVMVHGFGG…IEGASHHVYA (255 aa)).

It belongs to the peptidase S33 family. ABHD4/ABHD5 subfamily.

The catalysed reaction is N-hexadecanoyl-1,2-di-(9Z-octadecenoyl)-sn-glycero-3-phosphoethanolamine + H2O = N-hexadecanoyl-1-(9Z-octadecenoyl)-sn-glycero-3-phosphoethanolamine + (9Z)-octadecenoate + H(+). The enzyme catalyses an N-acyl-1,2-diacyl-sn-glycero-3-phosphoethanolamine + H2O = N,1-diacyl-sn-glycero-3-phosphoethanolamine + a fatty acid + H(+). It carries out the reaction N-hexadecanoyl-1-(9Z-octadecenoyl)-sn-glycero-3-phosphoethanolamine + H2O = N-hexadecanoyl-sn-glycero-3-phosphoethanolamine + (9Z)-octadecenoate + H(+). It catalyses the reaction N-octadecanoyl-1-(9Z-octadecenoyl)-sn-glycero-3-phosphoethanolamine + H2O = N-octadecanoyl-sn-glycero-3-phospho-ethanolamine + (9Z)-octadecenoate + H(+). The catalysed reaction is N-eicosanoyl-1-(9Z-octadecenoyl)-sn-glycero-3-phosphoethanolamine + H2O = N-eicosanoyl-sn-glycero-3-phosphoethanolamine + (9Z)-octadecenoate + H(+). The enzyme catalyses N,1-di-(9Z-octadecenoyl)-sn-glycero-3-phosphoethanolamine + H2O = N-(9Z-octadecenoyl)-sn-glycero-3-phosphoethanolamine + (9Z)-octadecenoate + H(+). It carries out the reaction N-(5Z,8Z,11Z,14Z-eicosatetraenoyl)-1-(9Z-octadecenoyl)-sn-glycero-3-phosphoethanolamine + H2O = N-(5Z,8Z,11Z,14Z-eicosatetraenoyl)-sn-glycero-3-phosphoethanolamine + (9Z)-octadecenoate + H(+). It catalyses the reaction 1-octadecanoyl-2-(9Z-octadecenoyl)-sn-glycero-3-phospho-(N-hexadecanoyl)-serine + H2O = 1-octadecanoyl-2-hydroxy-sn-glycero-3-phospho-(N-hexadecanoyl)-serine + (9Z)-octadecenoate + H(+). The catalysed reaction is 1-O-(1Z-octadecenoyl)-2-(9Z-octadecenoyl)-sn-glycero-3-phospho-N-hexadecanoyl-ethanolamine + H2O = 1-O-(1Z-octadecenyl)-sn-glycero-3-phospho-N-hexadecanoyl-ethanolamine + (9Z)-octadecenoate + H(+). The enzyme catalyses N,1-diacyl-sn-glycero-3-phosphoethanolamine + H2O = N-acyl-sn-glycero-3-phosphoethanolamine + a fatty acid + H(+). Lysophospholipase selective for N-acyl phosphatidylethanolamine (NAPE). Contributes to the biosynthesis of N-acyl ethanolamines, including the endocannabinoid anandamide by hydrolyzing the sn-1 and sn-2 acyl chains from N-acyl phosphatidylethanolamine (NAPE) generating glycerophospho-N-acyl ethanolamine (GP-NAE), an intermediate for N-acyl ethanolamine biosynthesis. Hydrolyzes substrates bearing saturated, monounsaturated, polyunsaturated N-acyl chains. Shows no significant activity towards other lysophospholipids, including lysophosphatidylcholine, lysophosphatidylethanolamine and lysophosphatidylserine. The protein is (Lyso)-N-acylphosphatidylethanolamine lipase of Bos taurus (Bovine).